The following is a 336-amino-acid chain: Iron(3+)-hydroxamate import system permease protein FhuG (336 aa).

9 helical membrane passes run 9–29 (LIVM…SLNL), 63–83 (IILS…LQSV), 91–111 (PGIL…IYFF), 124–144 (FMLP…IYIL), 155–175 (LILV…IFQL), 193–213 (IWGA…ILLL), 245–265 (ILLL…GGIA), 285–305 (TLIP…DTLA), and 313–333 (EIPV…YLLM).

It belongs to the binding-protein-dependent transport system permease family. FecCD subfamily. In terms of assembly, the complex is composed of an ATP-binding protein (FhuC), two transmembrane proteins (FhuB and FhuG) and a solute-binding protein (FhuD or YxeB).

The protein resides in the cell membrane. Part of the ABC transporter complex FhuBGCD involved in iron(3+)-hydroxamate import. Responsible for the translocation of the substrate across the membrane. This is Iron(3+)-hydroxamate import system permease protein FhuG (fhuG) from Bacillus subtilis (strain 168).